The primary structure comprises 563 residues: Germacrene-A synthase (563 aa).

Residues Asp316, Asp320, Asp460, Thr464, and Glu468 each contribute to the Mg(2+) site. A DDXXD motif motif is present at residues Asp316 to Asp320.

Belongs to the terpene synthase family. Tpsa subfamily. It depends on Mg(2+) as a cofactor. Requires Mn(2+) as cofactor. High expression in disk florets, moderate expression in ray florets and detected in leaves and stems, but not in roots.

The enzyme catalyses (2E,6E)-farnesyl diphosphate = (+)-(R)-germacrene A + diphosphate. It participates in secondary metabolite biosynthesis; terpenoid biosynthesis. Functionally, sesquiterpene synthase involved in germacrene A biosynthesis. May be involved in the biosynthesis of the sesquiterpene lactone matricine, one of the major active compounds of chamomile flowers. The polypeptide is Germacrene-A synthase (Matricaria chamomilla var. recutita (German chamomile)).